The following is a 315-amino-acid chain: MTRGKPGRAHKQAATGEHGLVIAAHGRHYLVERDGGGFLQCFPRGKRSECAVGDRVVYEATAVDQGVVVRVDERRNLLYRSDQFKSKVLAANLDQVIIMLGTEPSFSEDLLGRALVAAESLGITPLILLNKIDLTARLETARSRLALYRDLGYTIVELTVHGAPEAAHAALEPHVAGRASILIGQSGMGKSSLLNLLIPGVDAQTREISEKLDSGKHTTTFTRLYHLPADWGQGGMLIDSPGFQEFGLHHLSEGMLERAFPEFRPRLTECRFYNCRHLQEPGCGILGAMAEGKIDPRRHQLYAQLLHESEQQKPW.

The CP-type G domain maps to 82–246 (DQFKSKVLAA…LIDSPGFQEF (165 aa)). GTP is bound by residues 130–133 (NKID) and 184–192 (GQSGMGKSS). Zn(2+)-binding residues include Cys-270, Cys-275, His-277, and Cys-283.

The protein belongs to the TRAFAC class YlqF/YawG GTPase family. RsgA subfamily. Monomer. Associates with 30S ribosomal subunit, binds 16S rRNA. The cofactor is Zn(2+).

The protein localises to the cytoplasm. Its function is as follows. One of several proteins that assist in the late maturation steps of the functional core of the 30S ribosomal subunit. Helps release RbfA from mature subunits. May play a role in the assembly of ribosomal proteins into the subunit. Circularly permuted GTPase that catalyzes slow GTP hydrolysis, GTPase activity is stimulated by the 30S ribosomal subunit. The chain is Small ribosomal subunit biogenesis GTPase RsgA from Ralstonia pickettii (strain 12J).